The following is a 364-amino-acid chain: Lytic cellulose monooxygenase (364 aa).

The signal sequence occupies residues 1–34; sequence MARRSRYISLAAVMATLLSALGVTFLLGQGRAEA. Cu cation is bound by residues His-35 and His-144. The 191-residue stretch at 35 to 225 folds into the Chitin-binding type-4 domain; the sequence is HGVAMMPGSR…QENFFSCSDV (191 aa). Residues 234–261 are disordered; the sequence is VTGIRGSGGTPTPTPTPTTPPTTPPPTH. Over residues 245 to 260 the composition is skewed to pro residues; the sequence is TPTPTPTTPPTTPPPT. The CBM2 domain occupies 258–364; the sequence is PPTHSGSCMA…PVGTIGCVAP (107 aa).

Cu(2+) serves as cofactor.

The protein localises to the secreted. The enzyme catalyses [(1-&gt;4)-beta-D-glucosyl]n+m + reduced acceptor + O2 = [(1-&gt;4)-beta-D-glucosyl]m-1-(1-&gt;4)-D-glucono-1,5-lactone + [(1-&gt;4)-beta-D-glucosyl]n + acceptor + H2O.. The protein operates within glycan metabolism; cellulose degradation. Its function is as follows. Involved in the degradation of lignocellulosic biomass. Catalyzes the oxidative cleavage of glycosidic bonds in cellulosic substrates via a copper-dependent mechanism. Degrades phosphoric acid swollen cellulose (PASC) to oxidized cellooligosaccharides with degrees of polymerization of 4-8. Also shows activity on agricultural fiber paper pulps such as flax pulp. Is not active on chitin. This is Lytic cellulose monooxygenase from Streptomyces ambofaciens (strain ATCC 23877 / 3486 / DSM 40053 / JCM 4204 / NBRC 12836 / NRRL B-2516).